The primary structure comprises 437 residues: uncharacterized protein (437 aa).

Positions 63-87 (PSSANVSFQNSDDNLSTSRGRSASP) are enriched in polar residues. 3 disordered regions span residues 63 to 97 (PSSANVSFQNSDDNLSTSRGRSASPTPIRKFSNFP), 112 to 147 (VKKDQQTRNQLPPMKRLNSEEEEEQQGKTKTTKKET), and 346 to 437 (PKNA…YSIW). Residues 399 to 409 (EALSPSKSNPD) are compositionally biased toward polar residues. A compositionally biased stretch (low complexity) spans 425–437 (KKPSSSSSNYSIW).

This is an uncharacterized protein from Caenorhabditis elegans.